The following is a 339-amino-acid chain: D-erythrose-4-phosphate dehydrogenase (339 aa).

NAD(+) contacts are provided by residues 12 to 13 (RI) and arginine 81. Residues 154 to 156 (SCT), arginine 200, 213 to 214 (TK), and arginine 236 contribute to the substrate site. The active-site Nucleophile is cysteine 155. Asparagine 318 lines the NAD(+) pocket.

Belongs to the glyceraldehyde-3-phosphate dehydrogenase family. Epd subfamily. In terms of assembly, homotetramer.

The protein resides in the cytoplasm. The enzyme catalyses D-erythrose 4-phosphate + NAD(+) + H2O = 4-phospho-D-erythronate + NADH + 2 H(+). The protein operates within cofactor biosynthesis; pyridoxine 5'-phosphate biosynthesis; pyridoxine 5'-phosphate from D-erythrose 4-phosphate: step 1/5. Catalyzes the NAD-dependent conversion of D-erythrose 4-phosphate to 4-phosphoerythronate. This is D-erythrose-4-phosphate dehydrogenase from Escherichia coli (strain UTI89 / UPEC).